The chain runs to 477 residues: Glycogen synthase (477 aa).

Lys15 contributes to the ADP-alpha-D-glucose binding site.

This sequence belongs to the glycosyltransferase 1 family. Bacterial/plant glycogen synthase subfamily.

It carries out the reaction [(1-&gt;4)-alpha-D-glucosyl](n) + ADP-alpha-D-glucose = [(1-&gt;4)-alpha-D-glucosyl](n+1) + ADP + H(+). Its pathway is glycan biosynthesis; glycogen biosynthesis. Its function is as follows. Synthesizes alpha-1,4-glucan chains using ADP-glucose. The sequence is that of Glycogen synthase from Streptococcus pneumoniae serotype 2 (strain D39 / NCTC 7466).